We begin with the raw amino-acid sequence, 596 residues long: Aspartic proteinase yapsin-7 (596 aa).

The first 25 residues, 1 to 25 (MTCLILWYLWLISTFQLEFATASTA), serve as a signal peptide directing secretion. 2 N-linked (GlcNAc...) asparagine glycosylation sites follow: Asn26 and Asn59. Over 26 to 575 (NTTTTAKSGT…SPYTFNKDPA (550 aa)) the chain is Lumenal. Positions 56–440 (YYVNSTFGTP…DLEDNTIAIA (385 aa)) constitute a Peptidase A1 domain. Residue Asp74 is part of the active site. Residues Asn106, Asn131, Asn140, Asn143, Asn148, Asn175, and Asn308 are each glycosylated (N-linked (GlcNAc...) asparagine). The active site involves Asp321. 6 N-linked (GlcNAc...) asparagine glycosylation sites follow: Asn391, Asn455, Asn478, Asn484, Asn549, and Asn552. The helical transmembrane segment at 576–596 (GHVTRIASLLLLSIFSILIVL) threads the bilayer.

This sequence belongs to the peptidase A1 family.

Its subcellular location is the cytoplasm. The protein localises to the endoplasmic reticulum membrane. The protein is Aspartic proteinase yapsin-7 (YPS7) of Saccharomyces cerevisiae (strain ATCC 204508 / S288c) (Baker's yeast).